Here is a 329-residue protein sequence, read N- to C-terminus: MVVMNKTNLLLLILSLFLAINLSSAQLRGDFYAGTCPNVEQIVRNAVQKKIQQTFTTIPATLRLYFHDCFVNGCDASVMIASTNTNKAEKDHEDNLSLAGDGFDTVIKAKEAVDAVPNCRNKVSCADILTMATRDVVNLAGGPQYAVELGRRDGLSSSASSVTGKLPKPTFDLNQLNALFAENGLSPNDMIALSGAHTLGFAHCTKVFNRLYNFNKTNNVDPTINKDYVTELKASCPQNIDPRVAINMDPNTPRQFDNVYYKNLQQGKGLFTSDQVLFTDSRSKPTVDLWANNGQLFNQAFISSMIKLGRVGVKTGSNGNIRRDCGAFN.

Residues 1 to 25 (MVVMNKTNLLLLILSLFLAINLSSA) form the signal peptide. Intrachain disulfides connect Cys-36–Cys-119, Cys-69–Cys-74, Cys-125–Cys-325, and Cys-204–Cys-236. His-67 acts as the Proton acceptor in catalysis. Ca(2+)-binding residues include Asp-68, Val-71, Gly-73, Asp-75, and Ser-77. Pro-167 contributes to the substrate binding site. His-197 lines the heme b pocket. Residue Thr-198 coordinates Ca(2+). The N-linked (GlcNAc...) asparagine glycan is linked to Asn-215. 3 residues coordinate Ca(2+): Asp-249, Thr-252, and Asp-257.

The protein belongs to the peroxidase family. Classical plant (class III) peroxidase subfamily. Heme b serves as cofactor. The cofactor is Ca(2+).

The protein resides in the secreted. It carries out the reaction 2 a phenolic donor + H2O2 = 2 a phenolic radical donor + 2 H2O. In terms of biological role, removal of H(2)O(2), oxidation of toxic reductants, biosynthesis and degradation of lignin, suberization, auxin catabolism, response to environmental stresses such as wounding, pathogen attack and oxidative stress. These functions might be dependent on each isozyme/isoform in each plant tissue. This chain is Peroxidase 51 (PER51), found in Arabidopsis thaliana (Mouse-ear cress).